Consider the following 351-residue polypeptide: Phosphate acyltransferase (351 aa).

This sequence belongs to the PlsX family. Homodimer. Probably interacts with PlsY.

The protein localises to the cytoplasm. The enzyme catalyses a fatty acyl-[ACP] + phosphate = an acyl phosphate + holo-[ACP]. The protein operates within lipid metabolism; phospholipid metabolism. In terms of biological role, catalyzes the reversible formation of acyl-phosphate (acyl-PO(4)) from acyl-[acyl-carrier-protein] (acyl-ACP). This enzyme utilizes acyl-ACP as fatty acyl donor, but not acyl-CoA. In Maricaulis maris (strain MCS10) (Caulobacter maris), this protein is Phosphate acyltransferase.